Consider the following 554-residue polypeptide: Neutral amino acid transporter 9 (554 aa).

Residues Met1–Ser112 lie on the Cytoplasmic side of the membrane. A helical membrane pass occupies residues Ile113–Trp133. The segment at Thr122–Ser127 is important for arginine binding and amino acid transport. Ser127 is a binding site for arginine. Topologically, residues Gly134 to Gly139 are lumenal. A helical membrane pass occupies residues Phe140–Arg160. The Cytoplasmic portion of the chain corresponds to Val161 to Arg191. Residues Trp192 to Phe218 form a helical membrane-spanning segment. Residues Asn219–Thr276 are Lumenal-facing. Asn232, Asn241, Asn258, and Asn267 each carry an N-linked (GlcNAc...) asparagine glycan. A disulfide bond links Cys248 and Cys417. The helical transmembrane segment at Trp277–Leu293 threads the bilayer. Over Pro294 to Ser302 the chain is Cytoplasmic. The helical transmembrane segment at Phe303–Ala327 threads the bilayer. Residues His328–Arg349 lie on the Lumenal side of the membrane. The chain crosses the membrane as a helical span at residues Leu350–Ile370. Residues Thr371 to Ser387 are Cytoplasmic-facing. Residues Ile388 to Phe408 form a helical membrane-spanning segment. At Pro409–Asp430 the chain is on the lumenal side. Residues Ile431–Leu451 form a helical membrane-spanning segment. Positions Arg437–Val447 match the CARC motif motif. The short motif at Leu450–Arg456 is the CRAC motif element. The Cytoplasmic segment spans residues Gly452–Phe472. Residues His473–Pro493 traverse the membrane as a helical segment. Residues Asn494–Arg500 lie on the Lumenal side of the membrane. A helical transmembrane segment spans residues Phe501–Ile521. Over Ser522–Ser533 the chain is Cytoplasmic. Residues Ile534 to Met554 traverse the membrane as a helical segment.

It belongs to the amino acid/polyamine transporter 2 family. SLC38A9 subfamily. As to quaternary structure, associated component of the Ragulator complex. Associated component of the Rag GTPases heterodimers. Glycosylated.

It is found in the lysosome membrane. Its subcellular location is the late endosome membrane. The enzyme catalyses L-leucine(in) = L-leucine(out). The catalysed reaction is L-tyrosine(in) = L-tyrosine(out). It catalyses the reaction L-glutamine(out) = L-glutamine(in). It carries out the reaction L-asparagine(out) = L-asparagine(in). In terms of biological role, lysosomal amino acid transporter involved in the activation of mTORC1 in response to amino acid levels. Probably acts as an amino acid sensor of the Rag GTPases and Ragulator complexes, 2 complexes involved in amino acid sensing and activation of mTORC1, a signaling complex promoting cell growth in response to growth factors, energy levels, and amino acids. Following activation by amino acids, the Ragulator and Rag GTPases function as a scaffold recruiting mTORC1 to lysosomes where it is in turn activated. SLC38A9 mediates transport of amino acids with low capacity and specificity with a slight preference for polar amino acids. Acts as an arginine sensor. Following activation by arginine binding, mediates transport of L-glutamine, leucine and tyrosine with high efficiency, and is required for the efficient utilization of these amino acids after lysosomal protein degradation. However, the transport mechanism is not well defined and the role of sodium is not clear. Guanine exchange factor (GEF) that, upon arginine binding, stimulates GDP release from RRAGA and therefore activates the Rag GTPase heterodimer and the mTORC1 pathway in response to nutrient sufficiency. This Xenopus tropicalis (Western clawed frog) protein is Neutral amino acid transporter 9.